Consider the following 319-residue polypeptide: Aliphatic sulfonates import ATP-binding protein SsuB 1 (319 aa).

Residues 63–282 form the ABC transporter domain; it reads VTLSGVSKRF…ARASAAFAAL (220 aa). ATP is bound at residue 95-102; the sequence is GRSGCGKS.

It belongs to the ABC transporter superfamily. Aliphatic sulfonates importer (TC 3.A.1.17.2) family. In terms of assembly, the complex is composed of two ATP-binding proteins (SsuB), two transmembrane proteins (SsuC) and a solute-binding protein (SsuA).

It localises to the cell inner membrane. It catalyses the reaction ATP + H2O + aliphatic sulfonate-[sulfonate-binding protein]Side 1 = ADP + phosphate + aliphatic sulfonateSide 2 + [sulfonate-binding protein]Side 1.. Functionally, part of the ABC transporter complex SsuABC involved in aliphatic sulfonates import. Responsible for energy coupling to the transport system. The sequence is that of Aliphatic sulfonates import ATP-binding protein SsuB 1 from Burkholderia lata (strain ATCC 17760 / DSM 23089 / LMG 22485 / NCIMB 9086 / R18194 / 383).